The chain runs to 394 residues: Flap endonuclease 1 (394 aa).

Positions 1–104 (MGIKQLFSVI…GELAKRFQRK (104 aa)) are N-domain. Asp-34 is a binding site for Mg(2+). Residues Arg-47 and Arg-70 each coordinate DNA. 5 residues coordinate Mg(2+): Asp-86, Glu-158, Glu-160, Asp-179, and Asp-181. The segment at 122 to 253 (DVEKFSRRTV…STALKLIREH (132 aa)) is I-domain. Residue Glu-158 coordinates DNA. Positions 231 and 233 each coordinate DNA. Asp-233 contacts Mg(2+). Residues 341–349 (QQARIEGFF) are interaction with PCNA. The span at 356–383 (EEEKKAHKRKLEEQAEQKRKKVKEEKKE) shows a compositional bias: basic and acidic residues. The interval 356–394 (EEEKKAHKRKLEEQAEQKRKKVKEEKKEKAKLKAKPRGA) is disordered. Basic residues predominate over residues 384–394 (KAKLKAKPRGA).

This sequence belongs to the XPG/RAD2 endonuclease family. FEN1 subfamily. As to quaternary structure, interacts with PCNA. Three molecules of dnr-8/fen1 bind to one PCNA trimer with each molecule binding to one PCNA monomer. PCNA stimulates the nuclease activity without altering cleavage specificity. The cofactor is Mg(2+). Post-translationally, phosphorylated. Phosphorylation upon DNA damage induces relocalization to the nuclear plasma.

It is found in the nucleus. It localises to the nucleolus. The protein localises to the nucleoplasm. The protein resides in the mitochondrion. In terms of biological role, structure-specific nuclease with 5'-flap endonuclease and 5'-3' exonuclease activities involved in DNA replication and repair. During DNA replication, cleaves the 5'-overhanging flap structure that is generated by displacement synthesis when DNA polymerase encounters the 5'-end of a downstream Okazaki fragment. It enters the flap from the 5'-end and then tracks to cleave the flap base, leaving a nick for ligation. Also involved in the long patch base excision repair (LP-BER) pathway, by cleaving within the apurinic/apyrimidinic (AP) site-terminated flap. Acts as a genome stabilization factor that prevents flaps from equilibrating into structures that lead to duplications and deletions. Also possesses 5'-3' exonuclease activity on nicked or gapped double-stranded DNA, and exhibits RNase H activity. Also involved in replication and repair of rDNA and in repairing mitochondrial DNA. This is Flap endonuclease 1 (dnr-8) from Neurospora crassa (strain ATCC 24698 / 74-OR23-1A / CBS 708.71 / DSM 1257 / FGSC 987).